The following is a 315-amino-acid chain: DNA-directed RNA polymerase subunit alpha (315 aa).

The tract at residues 1 to 228 (MLEIEKPKIE…EHLRLFIGLT (228 aa)) is alpha N-terminal domain (alpha-NTD). Residues 245–315 (KDKILEMTIE…LGLGFRKADD (71 aa)) form an alpha C-terminal domain (alpha-CTD) region.

The protein belongs to the RNA polymerase alpha chain family. As to quaternary structure, homodimer. The RNAP catalytic core consists of 2 alpha, 1 beta, 1 beta' and 1 omega subunit. When a sigma factor is associated with the core the holoenzyme is formed, which can initiate transcription.

The catalysed reaction is RNA(n) + a ribonucleoside 5'-triphosphate = RNA(n+1) + diphosphate. Its function is as follows. DNA-dependent RNA polymerase catalyzes the transcription of DNA into RNA using the four ribonucleoside triphosphates as substrates. In Desulfitobacterium hafniense (strain DSM 10664 / DCB-2), this protein is DNA-directed RNA polymerase subunit alpha.